Here is a 561-residue protein sequence, read N- to C-terminus: Acylcarnitine hydrolase (561 aa).

Residues 1 to 26 form the signal peptide; sequence MARKQPHSWLNAVLFGLLLILIHVWG. Cys-97 and Cys-125 are oxidised to a cystine. Residue Ser-230 is the Acyl-ester intermediate of the active site. Cys-282 and Cys-293 form a disulfide bridge. Active-site charge relay system residues include Glu-347 and His-459.

It belongs to the type-B carboxylesterase/lipase family. As to expression, expressed in liver, stomach and kidney.

The protein resides in the microsome. It localises to the endoplasmic reticulum. The enzyme catalyses all-trans-retinyl hexadecanoate + H2O = all-trans-retinol + hexadecanoate + H(+). The catalysed reaction is an O-acyl-(R)-carnitine + H2O = (R)-carnitine + a fatty acid + H(+). Its function is as follows. Hydrolase with high activity towards palmitoylcarnitine. Is also active with p-nitrophenylacetate and alpha-naphthylacetate. May also hydrolyze retinyl esters. The polypeptide is Acylcarnitine hydrolase (Rattus norvegicus (Rat)).